A 1186-amino-acid polypeptide reads, in one-letter code: ATP-dependent helicase/nuclease subunit A (1186 aa).

The 459-residue stretch at 2-460 folds into the UvrD-like helicase ATP-binding domain; sequence NFSKNQRAVI…IELSENYRSQ (459 aa). Residue 23 to 30 coordinates ATP; the sequence is ASAGSGKT. A UvrD-like helicase C-terminal domain is found at 487–771; that stretch reads DVELKAANRD…SVMTIHAAKG (285 aa).

Belongs to the helicase family. AddA subfamily. As to quaternary structure, heterodimer of AddA and AddB/RexB. Mg(2+) is required as a cofactor.

It catalyses the reaction Couples ATP hydrolysis with the unwinding of duplex DNA by translocating in the 3'-5' direction.. The enzyme catalyses ATP + H2O = ADP + phosphate + H(+). Functionally, the heterodimer acts as both an ATP-dependent DNA helicase and an ATP-dependent, dual-direction single-stranded exonuclease. Recognizes the chi site generating a DNA molecule suitable for the initiation of homologous recombination. The AddA nuclease domain is required for chi fragment generation; this subunit has the helicase and 3' -&gt; 5' nuclease activities. This chain is ATP-dependent helicase/nuclease subunit A, found in Oenococcus oeni (strain ATCC BAA-331 / PSU-1).